The following is a 357-amino-acid chain: Glutamate 5-kinase (357 aa).

Lysine 7 contacts ATP. Residues serine 43, aspartate 130, and asparagine 142 each contribute to the substrate site. ATP-binding positions include 162–163 (TD) and 205–211 (TGGMTTK). Positions 270-353 (EGELQLDAGA…PVVVHRDGLV (84 aa)) constitute a PUA domain.

This sequence belongs to the glutamate 5-kinase family.

The protein localises to the cytoplasm. It catalyses the reaction L-glutamate + ATP = L-glutamyl 5-phosphate + ADP. It participates in amino-acid biosynthesis; L-proline biosynthesis; L-glutamate 5-semialdehyde from L-glutamate: step 1/2. Functionally, catalyzes the transfer of a phosphate group to glutamate to form L-glutamate 5-phosphate. The chain is Glutamate 5-kinase from Synechococcus sp. (strain CC9605).